The sequence spans 400 residues: MIIKPKIRGFICTTTHPVGCEANVKEQIELIKAKGKIANGPKKVLVVGSSSGYGLSSRITSAFGSDAATIGVFFEKPSSETKPGTAGWYNTAAFDKFAKAEGLYSKSINCDAFSHQAKQQVIELIKQDLGQIDMVVYSLASPVRKMPDTGEVIRSSLKPIGQTYTATAVDTNKNTIIDTSVEPATEQEIADTVTVMGGQDWELWMSALSEAGVLADNCKTVAYSYIGTELTWPIYWHGALGKAKMDLDRAAHALDSKLFATGGSANVAVLKSVVTQASSAIPVMPLYIAMVFKKMRQEGLHEGCIEQIYRLFSERLYRVDGQAPAVDSENRLRLDDWELREEIQQHCRDLWPLVTTENLSELTDYNEYKEEFLKLFGFGIDGIDYEAEVDPNVTFDVIEL.

Residues 48–53, 74–75, 111–112, and 139–140 contribute to the NAD(+) site; these read GSSSGY, FE, DA, and LA. Tyr225 provides a ligand contact to substrate. The Proton donor role is filled by Tyr235. NAD(+) contacts are provided by residues Lys244 and 273–275; that span reads VVT.

It belongs to the TER reductase family. As to quaternary structure, monomer.

The enzyme catalyses a 2,3-saturated acyl-[ACP] + NAD(+) = a (2E)-enoyl-[ACP] + NADH + H(+). The protein operates within lipid metabolism; fatty acid biosynthesis. In terms of biological role, involved in the final reduction of the elongation cycle of fatty acid synthesis (FAS II). Catalyzes the reduction of a carbon-carbon double bond in an enoyl moiety that is covalently linked to an acyl carrier protein (ACP). The polypeptide is Enoyl-[acyl-carrier-protein] reductase [NADH] (Shewanella frigidimarina (strain NCIMB 400)).